The primary structure comprises 431 residues: Forkhead box protein P3 (431 aa).

The interval 1-68 (MPNPRPGKPS…SSLNPMPPSQ (68 aa)) is disordered. Over residues 10–25 (SAPSLALGPSPGASPS) the composition is skewed to low complexity. Position 19 is a phosphoserine; by CDK2 (Ser-19). Lys-31 carries the post-translational modification N6-acetyllysine. A Nuclear export signal motif is present at residues 68 to 76 (QLQLPTLPL). The LXXLL motif signature appears at 92 to 96 (LQALL). Positions 106–190 (LSTVDAHART…STLSAVPQSS (85 aa)) are essential for transcriptional repressor activity and for interaction with KAT5 and HDAC7. The interaction with ZFP90 stretch occupies residues 106-198 (LSTVDAHART…SSYPLLANGV (93 aa)). An interaction with IKZF4 region spans residues 149–199 (LPPGINVASLEWVSREPALLCTFPNPSAPRKDSTLSAVPQSSYPLLANGVC). A C2H2-type zinc finger spans residues 197–222 (GVCKWPGCEKVFEEPEDFLKHCQADH). The Nuclear export signal signature appears at 239–248 (VQSLEQQLVL). Positions 239 to 260 (VQSLEQQLVLEKEKLSAMQAHL) are leucine-zipper. Residues Lys-250 and Lys-252 each participate in a glycyl lysine isopeptide (Lys-Gly) (interchain with G-Cter in ubiquitin) cross-link. N6-acetyllysine; alternate is present on residues Lys-263 and Lys-268. Glycyl lysine isopeptide (Lys-Gly) (interchain with G-Cter in ubiquitin); alternate cross-links involve residues Lys-263 and Lys-268. Residues 278-336 (GSCCIVAAGSQGPVVPAWSGPREAPDSLFAVRRHLWGSHGNSTFPEFLHNMDYFKFHNM) form an interaction with RUNX1 region. Positions 337-423 (RPPFTYATLI…RKKRSQRPSR (87 aa)) form a DNA-binding region, fork-head. Lys-393 is covalently cross-linked (Glycyl lysine isopeptide (Lys-Gly) (interchain with G-Cter in ubiquitin)). The Nuclear localization signal motif lies at 414 to 417 (RKKR). Position 418 is a phosphoserine (Ser-418). Residues 418-431 (SQRPSRCSNPTPGP) constitute a propeptide that is removed on maturation.

As to quaternary structure, homodimer. Dimerization is essential for its transcriptional regulator activity. Interacts with IKZF3. Isoform 1 (via LXXLL motif), but not isoform 2, interacts with isoform 4 of RORA (via AF-2 motif). Interacts with STUB1, HSPA8 and HSPA1A/B. Interacts with PPP1CA, PPP1CB and PPP1CG. Interacts with KAT5 and HDAC7. Interacts with HDAC9 in the absence of T-cell stimulation. Interacts with USP7. Interacts with isoform 2 of ZFP90 and can form a complex with TRIM28 in the presence of isoform 2 of ZFP90. Interacts with RUNX1. Interacts with RORC. Interacts with RELA and NFATC2. Interacts with RUNX2, RUNX3 and IKZF4. Polyubiquitinated, leading to its proteasomal degradation in regulatory T-cells (Treg) which is mediated by STUB1 in a HSPA1A/B-dependent manner. Deubiquitinated by USP7 and USP44; leading to increase in protein stability. Post-translationally, phosphorylation at Ser-418 regulates its transcriptional repressor activity and consequently, regulatory T-cells (Treg) suppressive function. Dephosphorylated at Ser-418 by protein phosphatase 1 (PP1) in Treg cells derived from patients with rheumatoid arthritis. Phosphorylation by CDK2 negatively regulates its transcriptional activity and protein stability. In terms of processing, acetylation on lysine residues stabilizes FOXP3 and promotes differentiation of T-cells into induced regulatory T-cells (iTregs) associated with suppressive functions. Acetylation is mediated by a coordinated action of KAT5 and EP300/p300 acetyltransferases: EP300/p300 is required to enhance KAT5 autoacetylation, promoting acetylation of FOXP3 by KAT5. Deacetylated by SIRT1. Undergoes proteolytic cleavage in activated regulatory T-cells (Treg), and can be cleaved at either the N- or C-terminal site, or at both sites.

The protein localises to the nucleus. It localises to the cytoplasm. Functionally, transcriptional regulator which is crucial for the development and inhibitory function of regulatory T-cells (Treg). Plays an essential role in maintaining homeostasis of the immune system by allowing the acquisition of full suppressive function and stability of the Treg lineage, and by directly modulating the expansion and function of conventional T-cells. Can act either as a transcriptional repressor or a transcriptional activator depending on its interactions with other transcription factors, histone acetylases and deacetylases. The suppressive activity of Treg involves the coordinate activation of many genes, including CTLA4 and TNFRSF18 by FOXP3 along with repression of genes encoding cytokines such as interleukin-2 (IL2) and interferon-gamma (IFNG). Inhibits cytokine production and T-cell effector function by repressing the activity of two key transcription factors, RELA and NFATC2. Mediates transcriptional repression of IL2 via its association with histone acetylase KAT5 and histone deacetylase HDAC7. Can activate the expression of TNFRSF18, IL2RA and CTLA4 and repress the expression of IL2 and IFNG via its association with transcription factor RUNX1. Inhibits the differentiation of IL17 producing helper T-cells (Th17) by antagonizing RORC function, leading to down-regulation of IL17 expression, favoring Treg development. Inhibits the transcriptional activator activity of RORA. Can repress the expression of IL2 and IFNG via its association with transcription factor IKZF4. This Homo sapiens (Human) protein is Forkhead box protein P3 (FOXP3).